A 418-amino-acid chain; its full sequence is Tryptophan synthase beta chain (418 aa).

Polar residues predominate over residues 1–18 (MTSTLPKASQPDPSSLQP). The tract at residues 1-28 (MTSTLPKASQPDPSSLQPSARPGAHGRF) is disordered. Position 111 is an N6-(pyridoxal phosphate)lysine (Lys-111).

The protein belongs to the TrpB family. In terms of assembly, tetramer of two alpha and two beta chains. Pyridoxal 5'-phosphate serves as cofactor.

The enzyme catalyses (1S,2R)-1-C-(indol-3-yl)glycerol 3-phosphate + L-serine = D-glyceraldehyde 3-phosphate + L-tryptophan + H2O. It participates in amino-acid biosynthesis; L-tryptophan biosynthesis; L-tryptophan from chorismate: step 5/5. Functionally, the beta subunit is responsible for the synthesis of L-tryptophan from indole and L-serine. The chain is Tryptophan synthase beta chain from Synechococcus sp. (strain CC9902).